The chain runs to 930 residues: Isoleucine--tRNA ligase (930 aa).

A 'HIGH' region motif is present at residues 57–67 (PYANGNIHVGH). Glu554 contributes to the L-isoleucyl-5'-AMP binding site. The short motif at 595-599 (KMSKS) is the 'KMSKS' region element. Lys598 provides a ligand contact to ATP. Zn(2+) is bound by residues Cys888, Cys891, Cys908, and Cys911.

Belongs to the class-I aminoacyl-tRNA synthetase family. IleS type 1 subfamily. Monomer. It depends on Zn(2+) as a cofactor.

It localises to the cytoplasm. It catalyses the reaction tRNA(Ile) + L-isoleucine + ATP = L-isoleucyl-tRNA(Ile) + AMP + diphosphate. Catalyzes the attachment of isoleucine to tRNA(Ile). As IleRS can inadvertently accommodate and process structurally similar amino acids such as valine, to avoid such errors it has two additional distinct tRNA(Ile)-dependent editing activities. One activity is designated as 'pretransfer' editing and involves the hydrolysis of activated Val-AMP. The other activity is designated 'posttransfer' editing and involves deacylation of mischarged Val-tRNA(Ile). This is Isoleucine--tRNA ligase from Streptococcus pneumoniae (strain CGSP14).